A 1935-amino-acid polypeptide reads, in one-letter code: Myosin-7 (1935 aa).

Positions 32-81 (DLKKDVYVPDDKEEFVKAKILSREGGKVTAETEHGKTVTVKEDQVLQQNP) constitute a Myosin N-terminal SH3-like domain. The 694-residue stretch at 85 to 778 (DKIEDMAMLT…LLGLLEEMRD (694 aa)) folds into the Myosin motor domain. Position 129 is an N6,N6,N6-trimethyllysine (Lys129). Residue 178 to 185 (GESGAGKT) participates in ATP binding. Thr378 is modified (phosphothreonine). Actin-binding stretches follow at residues 655 to 677 (LNKLMTNLRSTHPHFVRCIIPNE) and 757 to 771 (KFGHTKVFFKAGLLG). In terms of domain architecture, IQ spans 781 to 810 (LSRIITRIQAQSRGVLSRMEFKKLLERRDS). The stretch at 839–1935 (LLKSAETEKE…DIGTKGLNEE (1097 aa)) forms a coiled coil. A phosphoserine mark is found at Ser1137 and Ser1269. Residue Thr1282 is modified to Phosphothreonine. The residue at position 1308 (Tyr1308) is a Phosphotyrosine. Thr1309 carries the phosphothreonine modification. The residue at position 1510 (Ser1510) is a Phosphoserine. At Thr1513 the chain carries Phosphothreonine. Residues 1907-1935 (EERADIAESQVNKLRAKSRDIGTKGLNEE) form a disordered region. Over residues 1923–1935 (KSRDIGTKGLNEE) the composition is skewed to basic and acidic residues.

This sequence belongs to the TRAFAC class myosin-kinesin ATPase superfamily. Myosin family. In terms of assembly, muscle myosin is a hexameric protein that consists of 2 heavy chain subunits (MHC), 2 alkali light chain subunits (MLC) and 2 regulatory light chain subunits (MLC-2). Interacts with ECPAS. Interacts (via C-terminus) with LRRC39.

The protein resides in the cytoplasm. It is found in the myofibril. Its subcellular location is the sarcomere. In terms of biological role, myosins are actin-based motor molecules with ATPase activity essential for muscle contraction. Forms regular bipolar thick filaments that, together with actin thin filaments, constitute the fundamental contractile unit of skeletal and cardiac muscle. The polypeptide is Myosin-7 (MYH7) (Sus scrofa (Pig)).